The primary structure comprises 329 residues: tRNA uridine(34) hydroxylase (329 aa).

Residues 123-217 (SDPETVLIDT…YLEEVPKEKS (95 aa)) enclose the Rhodanese domain. The Cysteine persulfide intermediate role is filled by Cys-177. The tract at residues 310–329 (LNKQKKQQAKEAARKKTEKN) is disordered. The segment covering 317 to 329 (QAKEAARKKTEKN) has biased composition (basic and acidic residues).

Belongs to the TrhO family.

It catalyses the reaction uridine(34) in tRNA + AH2 + O2 = 5-hydroxyuridine(34) in tRNA + A + H2O. Its function is as follows. Catalyzes oxygen-dependent 5-hydroxyuridine (ho5U) modification at position 34 in tRNAs. This chain is tRNA uridine(34) hydroxylase, found in Francisella tularensis subsp. novicida (strain U112).